The following is a 71-amino-acid chain: Ubiquinol-cytochrome c reductase complex assembly factor 6 (71 aa).

Topologically, residues 1 to 8 (MPAGVPMS) are mitochondrial matrix. Residues 9–25 (TYLKMFAASLLAMCAGA) traverse the membrane as a helical; Signal-anchor for type II membrane protein segment. Residues 26 to 71 (EVVHRYYRPDLTIPEIPPKRGELKTELLGLKERKHKPQVSQQEELK) are Mitochondrial intermembrane-facing.

The protein belongs to the UQCC6 family. In terms of assembly, interacts with UQCRC1. Interacts with UQCRQ. Interacts with UQCC5. Forms a complex, named COMB/coordinator of mitochondrial CYTB biogenesis, composed of UQCC1, UQCC2, UQCC4, UQCC5 and UQCC6; stabilizes nascent cytochrome b/MT-CYB and promotes its membrane insertion. Forms a complex, named COMA, composed of UQCC1, UQCC2 and UQCC4; activates MT-CYB translation. Forms a complex, named COMC, composed of UQCC1, UQCC2; UQCC3 and UQCC4; mediates MT-CYB hemylation and association with the first nuclear-encoded complex III subunit UQCRQ. Interacts with MT-CYB. As to expression, cardiac and skeletal muscle (at protein level).

The protein resides in the mitochondrion inner membrane. In terms of biological role, required for the assembly and stability of the mitochondrial ubiquinol-cytochrome c reductase complex (complex III (CIII) or cytochrome b-c1 complex), a multisubunit transmembrane complex that is part of the mitochondrial electron transport chain (ETC) which drives oxidative phosphorylation. Mediates early complex III biogenesis. Participates in regulating the levels of electron transport chain proteins, and therefore energy supply, in response to changes in energy demand. Also required for cytochrome c oxidase complex (complex IV) assembly. This is Ubiquinol-cytochrome c reductase complex assembly factor 6 from Homo sapiens (Human).